Here is a 177-residue protein sequence, read N- to C-terminus: Large ribosomal subunit protein uL6 (177 aa).

This sequence belongs to the universal ribosomal protein uL6 family. As to quaternary structure, part of the 50S ribosomal subunit.

Its function is as follows. This protein binds to the 23S rRNA, and is important in its secondary structure. It is located near the subunit interface in the base of the L7/L12 stalk, and near the tRNA binding site of the peptidyltransferase center. This Methanocella arvoryzae (strain DSM 22066 / NBRC 105507 / MRE50) protein is Large ribosomal subunit protein uL6.